Here is a 1040-residue protein sequence, read N- to C-terminus: Probable starch synthase 4, chloroplastic/amyloplastic (1040 aa).

Residues 1 to 42 constitute a chloroplast transit peptide; it reads MTTKLSSFCFLTHGLAGISCEREHGSSRRFFYLPSRRLVSTS. The tract at residues 43–142 is disordered; sequence CKMRQQRGFD…KSKTAKKKGE (100 aa). Basic and acidic residues-rich tracts occupy residues 52-61 and 112-124; these read DSSKRQEVKK and NHAD…KDDI. Residues 187–466 adopt a coiled-coil conformation; it reads ELMTMIRSAE…EESKKKSRDE (280 aa). ADP contacts are provided by Lys556, Gly559, and Asp562. (1,4-alpha-D-glucosyl)n-binding residues include Trp679 and Gln680. Arg849, Lys854, Lys906, Asp908, Tyr916, Leu933, and Thr934 together coordinate ADP.

The protein belongs to the glycosyltransferase 1 family. Bacterial/plant glycogen synthase subfamily. Interacts with PTST2. Interacts with PII1; the interaction is essential for the initiation of starch granules biosynthesis in leaf chloroplasts. In terms of tissue distribution, expressed in leaves and flowers.

The protein localises to the plastid. The protein resides in the chloroplast. Its subcellular location is the amyloplast. It is found in the chloroplast stroma. It catalyses the reaction [(1-&gt;4)-alpha-D-glucosyl](n) + ADP-alpha-D-glucose = [(1-&gt;4)-alpha-D-glucosyl](n+1) + ADP + H(+). It participates in glycan biosynthesis; starch biosynthesis. Its function is as follows. Probably involved in the priming of starch granule formation. May play a regulatory role in the control of starch accumulation in plastids. Is necessary and sufficient to establish the correct number of starch granules observed in chloroplasts. The sequence is that of Probable starch synthase 4, chloroplastic/amyloplastic from Arabidopsis thaliana (Mouse-ear cress).